The sequence spans 653 residues: Probable potassium transport system protein Kup (653 aa).

The next 12 helical transmembrane spans lie at 37 to 57 (ALLALGALGIVYGDIGTSPLY), 79 to 99 (VLSLIFWSLIIVVSVKYLLLV), 134 to 154 (ITLGIFGAALLYGDGIITPAI), 168 to 188 (AVFDPYVIPIALVILVALFLV), 196 to 216 (IGAVFGPVMCIWFLTLAGLGV), 243 to 263 (LHGFLVLGGVFLVVTGCEALY), 278 to 298 (WFSMVLPALMLNYLGQGALLL), 320 to 340 (LVALATVAGVIASQALIAGVF), 368 to 388 (IYLPGLNWALLVGVVALVLGF), 397 to 417 (AYGIAVSTAMVITTLMAYVVA), 426 to 446 (WVAIPVVGLFLSVELAFFGAN), and 450 to 470 (VADGGWFPLLMAVVVFTLMTT).

Belongs to the HAK/KUP transporter (TC 2.A.72) family.

Its subcellular location is the cell inner membrane. It catalyses the reaction K(+)(in) + H(+)(in) = K(+)(out) + H(+)(out). Transport of potassium into the cell. Likely operates as a K(+):H(+) symporter. This chain is Probable potassium transport system protein Kup, found in Myxococcus xanthus (strain DK1622).